The following is a 319-amino-acid chain: ATP-dependent 6-phosphofructokinase (319 aa).

Gly11 provides a ligand contact to ATP. 21 to 25 (RAVVR) is a binding site for ADP. ATP contacts are provided by residues 72–73 (RS) and 102–105 (GDGS). Asp103 is a binding site for Mg(2+). 125 to 127 (TID) is a substrate binding site. Asp127 (proton acceptor) is an active-site residue. An ADP-binding site is contributed by Arg154. Substrate contacts are provided by residues Arg162 and 169 to 171 (MGR). Residues 185–187 (GAE) and 213–215 (KMH) contribute to the ADP site. Residues Glu222, Arg243, and 249–252 (HIQR) contribute to the substrate site.

This sequence belongs to the phosphofructokinase type A (PFKA) family. ATP-dependent PFK group I subfamily. Prokaryotic clade 'B1' sub-subfamily. Homotetramer. Mg(2+) serves as cofactor.

It is found in the cytoplasm. It carries out the reaction beta-D-fructose 6-phosphate + ATP = beta-D-fructose 1,6-bisphosphate + ADP + H(+). It participates in carbohydrate degradation; glycolysis; D-glyceraldehyde 3-phosphate and glycerone phosphate from D-glucose: step 3/4. Its activity is regulated as follows. Allosterically activated by ADP and other diphosphonucleosides, and allosterically inhibited by phosphoenolpyruvate. Catalyzes the phosphorylation of D-fructose 6-phosphate to fructose 1,6-bisphosphate by ATP, the first committing step of glycolysis. In Clostridium tetani (strain Massachusetts / E88), this protein is ATP-dependent 6-phosphofructokinase.